The sequence spans 136 residues: ATP synthase epsilon chain (136 aa).

The protein belongs to the ATPase epsilon chain family. In terms of assembly, F-type ATPases have 2 components, CF(1) - the catalytic core - and CF(0) - the membrane proton channel. CF(1) has five subunits: alpha(3), beta(3), gamma(1), delta(1), epsilon(1). CF(0) has three main subunits: a, b and c.

The protein resides in the cell inner membrane. Produces ATP from ADP in the presence of a proton gradient across the membrane. The protein is ATP synthase epsilon chain of Persephonella marina (strain DSM 14350 / EX-H1).